An 89-amino-acid chain; its full sequence is Phosphocarrier protein HPr (89 aa).

Residues 1–88 (MLKQSIEIIN…DLINGYFGEG (88 aa)) form the HPr domain. His15 acts as the Pros-phosphohistidine intermediate in catalysis. Ser46 bears the Phosphoserine; by HPrK/P mark.

It belongs to the HPr family.

Its subcellular location is the cytoplasm. Phosphorylation on Ser-46 inhibits the phosphoryl transfer from enzyme I to HPr. General (non sugar-specific) component of the phosphoenolpyruvate-dependent sugar phosphotransferase system (sugar PTS). This major carbohydrate active-transport system catalyzes the phosphorylation of incoming sugar substrates concomitantly with their translocation across the cell membrane. The phosphoryl group from phosphoenolpyruvate (PEP) is transferred to the phosphoryl carrier protein HPr by enzyme I. Phospho-HPr then transfers it to the PTS EIIA domain. In Neisseria meningitidis serogroup A / serotype 4A (strain DSM 15465 / Z2491), this protein is Phosphocarrier protein HPr (ptsH).